A 31-amino-acid polypeptide reads, in one-letter code: Putative translational regulatory protein ArgL (31 aa).

In terms of biological role, may serve a regulatory role in expression of downstream gene argF; in an argL-argF-lacZ fusion mutation of the start codon to a stop codon in argL increases expression of beta-galactosidase. The protein is Putative translational regulatory protein ArgL of Escherichia coli (strain K12).